Here is a 577-residue protein sequence, read N- to C-terminus: 2-succinyl-5-enolpyruvyl-6-hydroxy-3-cyclohexene-1-carboxylate synthase (577 aa).

This sequence belongs to the TPP enzyme family. MenD subfamily. In terms of assembly, homodimer. Mg(2+) is required as a cofactor. Mn(2+) serves as cofactor. The cofactor is thiamine diphosphate.

The catalysed reaction is isochorismate + 2-oxoglutarate + H(+) = 5-enolpyruvoyl-6-hydroxy-2-succinyl-cyclohex-3-ene-1-carboxylate + CO2. Its pathway is quinol/quinone metabolism; 1,4-dihydroxy-2-naphthoate biosynthesis; 1,4-dihydroxy-2-naphthoate from chorismate: step 2/7. It functions in the pathway cofactor biosynthesis; phylloquinone biosynthesis. Catalyzes the thiamine diphosphate-dependent decarboxylation of 2-oxoglutarate and the subsequent addition of the resulting succinic semialdehyde-thiamine pyrophosphate anion to isochorismate to yield 2-succinyl-5-enolpyruvyl-6-hydroxy-3-cyclohexene-1-carboxylate (SEPHCHC). This is 2-succinyl-5-enolpyruvyl-6-hydroxy-3-cyclohexene-1-carboxylate synthase from Synechococcus sp. (strain CC9311).